A 457-amino-acid chain; its full sequence is Multidrug resistance protein MdtK (457 aa).

The next 12 membrane-spanning stretches (helical) occupy residues 11–31, 53–73, 93–113, 127–147, 160–180, 189–209, 243–263, 276–296, 314–334, 350–370, 387–407, and 418–438; these read LLAL…MGFV, IWLP…PVIA, WLAG…GYII, AVGY…FQVA, GMVM…IFIY, GGVG…LAMV, LPIA…ALLV, IALN…AAVT, AART…IFTV, VVTL…SDSI, IFYI…YILA, and PAGF…MMML.

It belongs to the multi antimicrobial extrusion (MATE) (TC 2.A.66.1) family. MdtK subfamily.

The protein localises to the cell inner membrane. Its function is as follows. Multidrug efflux pump that functions probably as a Na(+)/drug antiporter. This Escherichia coli O17:K52:H18 (strain UMN026 / ExPEC) protein is Multidrug resistance protein MdtK.